Reading from the N-terminus, the 183-residue chain is Crossover junction endodeoxyribonuclease RuvC (183 aa).

Catalysis depends on residues D7, E66, and D138. D7, E66, and D138 together coordinate Mg(2+).

Belongs to the RuvC family. As to quaternary structure, homodimer which binds Holliday junction (HJ) DNA. The HJ becomes 2-fold symmetrical on binding to RuvC with unstacked arms; it has a different conformation from HJ DNA in complex with RuvA. In the full resolvosome a probable DNA-RuvA(4)-RuvB(12)-RuvC(2) complex forms which resolves the HJ. It depends on Mg(2+) as a cofactor.

Its subcellular location is the cytoplasm. It carries out the reaction Endonucleolytic cleavage at a junction such as a reciprocal single-stranded crossover between two homologous DNA duplexes (Holliday junction).. Its function is as follows. The RuvA-RuvB-RuvC complex processes Holliday junction (HJ) DNA during genetic recombination and DNA repair. Endonuclease that resolves HJ intermediates. Cleaves cruciform DNA by making single-stranded nicks across the HJ at symmetrical positions within the homologous arms, yielding a 5'-phosphate and a 3'-hydroxyl group; requires a central core of homology in the junction. The consensus cleavage sequence is 5'-(A/T)TT(C/G)-3'. Cleavage occurs on the 3'-side of the TT dinucleotide at the point of strand exchange. HJ branch migration catalyzed by RuvA-RuvB allows RuvC to scan DNA until it finds its consensus sequence, where it cleaves and resolves the cruciform DNA. The sequence is that of Crossover junction endodeoxyribonuclease RuvC from Burkholderia ambifaria (strain MC40-6).